The chain runs to 159 residues: SsrA-binding protein (159 aa).

The protein belongs to the SmpB family.

The protein localises to the cytoplasm. In terms of biological role, required for rescue of stalled ribosomes mediated by trans-translation. Binds to transfer-messenger RNA (tmRNA), required for stable association of tmRNA with ribosomes. tmRNA and SmpB together mimic tRNA shape, replacing the anticodon stem-loop with SmpB. tmRNA is encoded by the ssrA gene; the 2 termini fold to resemble tRNA(Ala) and it encodes a 'tag peptide', a short internal open reading frame. During trans-translation Ala-aminoacylated tmRNA acts like a tRNA, entering the A-site of stalled ribosomes, displacing the stalled mRNA. The ribosome then switches to translate the ORF on the tmRNA; the nascent peptide is terminated with the 'tag peptide' encoded by the tmRNA and targeted for degradation. The ribosome is freed to recommence translation, which seems to be the essential function of trans-translation. This chain is SsrA-binding protein, found in Acidothermus cellulolyticus (strain ATCC 43068 / DSM 8971 / 11B).